A 165-amino-acid chain; its full sequence is Chorismate pyruvate-lyase (165 aa).

Met35, Arg77, Leu115, and Glu156 together coordinate substrate.

The protein belongs to the UbiC family. In terms of assembly, monomer.

Its subcellular location is the cytoplasm. The enzyme catalyses chorismate = 4-hydroxybenzoate + pyruvate. It participates in cofactor biosynthesis; ubiquinone biosynthesis. Removes the pyruvyl group from chorismate, with concomitant aromatization of the ring, to provide 4-hydroxybenzoate (4HB) for the ubiquinone pathway. The protein is Chorismate pyruvate-lyase of Escherichia coli O17:K52:H18 (strain UMN026 / ExPEC).